The following is a 487-amino-acid chain: Glutamyl-tRNA(Gln) amidotransferase subunit A (487 aa).

Catalysis depends on charge relay system residues Lys74 and Ser149. Ser173 acts as the Acyl-ester intermediate in catalysis.

Belongs to the amidase family. GatA subfamily. As to quaternary structure, heterotrimer of A, B and C subunits.

It carries out the reaction L-glutamyl-tRNA(Gln) + L-glutamine + ATP + H2O = L-glutaminyl-tRNA(Gln) + L-glutamate + ADP + phosphate + H(+). In terms of biological role, allows the formation of correctly charged Gln-tRNA(Gln) through the transamidation of misacylated Glu-tRNA(Gln) in organisms which lack glutaminyl-tRNA synthetase. The reaction takes place in the presence of glutamine and ATP through an activated gamma-phospho-Glu-tRNA(Gln). The chain is Glutamyl-tRNA(Gln) amidotransferase subunit A from Synechococcus sp. (strain CC9311).